The primary structure comprises 956 residues: MEEFVIPVFSERDIPYSLLNHYPLAIQIDVKVDDEGGKHNLIKIPESDMIDVPRLSIIEALNYRPKRNDGVVVPRLLDITLRAYDNRKSAKNAKGVEFMTDTKWMKWAIDDKMDIQPLKVTLDNHCSVNHQLFNCIVKARSANADTIYYDYYPLENGAKRCNHTNLDLLRSLTTTEMFHILQGAAYALKTTYELVAHSERENMSESYQVGTQRWIQLRKGTKIGYRGQPYERFISSLVQVIIKGKIPDEIRTEIAELNRIKDEWKNAAYDRTEIRALELCKILSAIGRKMLDVQEEPKDEMALSTRFQFKLDEKFIRTDQEHVNIFKVGGSATDDGRFYALIAIAGTDTQQGRVWRTNPYPCLRGALIAAECELGDVYFTLRQTYKWSLRPEYGQRERPLEDNKYVFARLNLFDTNLAVGDEIIHWRYEVYQPKETTHDDGYICVSQKGDDELLCEVDEDRYKEMFDRMIQGGWDQERFKLHNILTEPNLLTIDFEKDAYLGARSELVFPPYYDKWINSPMFNARLKIARGEIATWKADDPWSNRAVHGYIKTSAESLEYALGPYYDLRLQLFGDTLSLGQRQSAVFEHMAQQDDFSTLTDYTKGRTVCPHSGGTFYTFRKVALIILSNYERLDPSLHEGREHETYMHPAVNDVFRRHVLEMKDFSQLICFVFDYIFEKHVQLRNAKEARRIIYLIQNTSGAYRLDVLREAFPNFLKHVMNLRDVKRICDLNVINFFPLLFLVQDNISYWHRQWSIPMILFDQVIRLIPVEVGAYANRFGLKSFFNFIRFHPGDSKKRQDADDTHKEFGSICFEYYTTTKISQGEIDVPVVTSKLDTLKLHVASLCAGLADSLVYTLPVAHPKKSIVLIIVGDDKLEPQIRSEQIVNKYYYSRRHISGVVSICVNQGGQLKVHSMGITRHRICDKSILKYKCKVVLVRMPGHVFGNDELMTKLLNV.

This sequence belongs to the orbivirus VP2 family.

The protein resides in the virion. Its function is as follows. The VP2 protein is one of the two proteins (with VP5) which constitute the virus particle outer capsid. It is the major target of the host immunogenic response. Responsible for viral attachment to target host cell, probably by binding to sialic acid. This attachment induces virion internalization predominantly through clathrin-dependent endocytosis. The sequence is that of Outer capsid protein VP2 (Segment-2) from Bluetongue virus 10 (isolate USA) (BTV 10).